The chain runs to 507 residues: tRNA-2-methylthio-N(6)-dimethylallyladenosine synthase (507 aa).

The MTTase N-terminal domain occupies 13–129 (RTYQVRTYGC…LPALLERARH (117 aa)). 6 residues coordinate [4Fe-4S] cluster: cysteine 22, cysteine 58, cysteine 92, cysteine 166, cysteine 170, and cysteine 173. Residues 152–388 (RESAYAAWVS…IALQESVTLE (237 aa)) enclose the Radical SAM core domain. Positions 391-462 (QKQIGRMIEV…PHHLIADDGV (72 aa)) constitute a TRAM domain. The segment covering 459–478 (DDGVRSHRRTRAGDAHEAGK) has biased composition (basic and acidic residues). A disordered region spans residues 459 to 492 (DDGVRSHRRTRAGDAHEAGKKPSTPGIGLGMPAI).

It belongs to the methylthiotransferase family. MiaB subfamily. Monomer. The cofactor is [4Fe-4S] cluster.

The protein localises to the cytoplasm. The catalysed reaction is N(6)-dimethylallyladenosine(37) in tRNA + (sulfur carrier)-SH + AH2 + 2 S-adenosyl-L-methionine = 2-methylsulfanyl-N(6)-dimethylallyladenosine(37) in tRNA + (sulfur carrier)-H + 5'-deoxyadenosine + L-methionine + A + S-adenosyl-L-homocysteine + 2 H(+). In terms of biological role, catalyzes the methylthiolation of N6-(dimethylallyl)adenosine (i(6)A), leading to the formation of 2-methylthio-N6-(dimethylallyl)adenosine (ms(2)i(6)A) at position 37 in tRNAs that read codons beginning with uridine. The chain is tRNA-2-methylthio-N(6)-dimethylallyladenosine synthase from Mycobacteroides abscessus (strain ATCC 19977 / DSM 44196 / CCUG 20993 / CIP 104536 / JCM 13569 / NCTC 13031 / TMC 1543 / L948) (Mycobacterium abscessus).